We begin with the raw amino-acid sequence, 455 residues long: Serine--tRNA ligase (455 aa).

Position 252–254 (252–254 (TAE)) interacts with L-serine. ATP is bound by residues 283 to 285 (RKE) and Val299. Residue Glu306 participates in L-serine binding. ATP is bound at residue 370 to 373 (EVVS). Residue Thr406 coordinates L-serine.

It belongs to the class-II aminoacyl-tRNA synthetase family. Type-1 seryl-tRNA synthetase subfamily. Homodimer. The tRNA molecule binds across the dimer.

The protein resides in the cytoplasm. It catalyses the reaction tRNA(Ser) + L-serine + ATP = L-seryl-tRNA(Ser) + AMP + diphosphate + H(+). The enzyme catalyses tRNA(Sec) + L-serine + ATP = L-seryl-tRNA(Sec) + AMP + diphosphate + H(+). It participates in aminoacyl-tRNA biosynthesis; selenocysteinyl-tRNA(Sec) biosynthesis; L-seryl-tRNA(Sec) from L-serine and tRNA(Sec): step 1/1. Its function is as follows. Catalyzes the attachment of serine to tRNA(Ser). Is also able to aminoacylate tRNA(Sec) with serine, to form the misacylated tRNA L-seryl-tRNA(Sec), which will be further converted into selenocysteinyl-tRNA(Sec). In Thermococcus kodakarensis (strain ATCC BAA-918 / JCM 12380 / KOD1) (Pyrococcus kodakaraensis (strain KOD1)), this protein is Serine--tRNA ligase.